Reading from the N-terminus, the 376-residue chain is MNQAIRSVEYDRPQGTACSIGQAWAKVPDSPSTHERLALKERIRGLLKREKAVLVAHYYVDAELQELADETGGCVADSLEMARFGRDHDAQTLVVAGVRFMGETAKILSPNKRILMPDLDATCSLDLGCPVDEFSAFCDAHPDRIVVVYANTSAAVKARADWMVTSSIGLEIVADLHARGEKIIWAPDRHLGGYIQKKTGADMLLWQGSCLVHDEFKGVELDLLRAEYPDAKVLVHPESPESVVAQADVVGSTTQLIDAAKNSSATHFIVATDLGILHKMRIAAPGKTFIEAPTAGNSATCKSCAHCPWMAMNGLRNLAEVLERGHNEIFVDAAIGERARLPIDRMLDFAARHKKRVQASGDLAHDTALFSNVGAA.

The iminosuccinate site is built by H57 and S78. Position 123 (C123) interacts with [4Fe-4S] cluster. Iminosuccinate is bound by residues 149 to 151 and S166; that span reads YAN. C210 contributes to the [4Fe-4S] cluster binding site. Iminosuccinate contacts are provided by residues 236–238 and T253; that span reads HPE. C307 is a [4Fe-4S] cluster binding site.

It belongs to the quinolinate synthase family. Type 1 subfamily. Requires [4Fe-4S] cluster as cofactor.

Its subcellular location is the cytoplasm. The enzyme catalyses iminosuccinate + dihydroxyacetone phosphate = quinolinate + phosphate + 2 H2O + H(+). It functions in the pathway cofactor biosynthesis; NAD(+) biosynthesis; quinolinate from iminoaspartate: step 1/1. In terms of biological role, catalyzes the condensation of iminoaspartate with dihydroxyacetone phosphate to form quinolinate. This is Quinolinate synthase from Paraburkholderia phymatum (strain DSM 17167 / CIP 108236 / LMG 21445 / STM815) (Burkholderia phymatum).